The sequence spans 295 residues: Glutamyl-Q tRNA(Asp) synthetase (295 aa).

L-glutamate-binding positions include 6 to 10 (RFAPS) and glutamate 42. The 'HIGH' region motif lies at 9–19 (PSPTGAMHLGN). Residues cysteine 93, cysteine 95, tyrosine 118, and cysteine 122 each contribute to the Zn(2+) site. Residues tyrosine 177 and arginine 195 each coordinate L-glutamate. A 'KMSKS' region motif is present at residues 233–237 (RLAKR). Lysine 236 is an ATP binding site.

It belongs to the class-I aminoacyl-tRNA synthetase family. GluQ subfamily. It depends on Zn(2+) as a cofactor.

Its function is as follows. Catalyzes the tRNA-independent activation of glutamate in presence of ATP and the subsequent transfer of glutamate onto a tRNA(Asp). Glutamate is transferred on the 2-amino-5-(4,5-dihydroxy-2-cyclopenten-1-yl) moiety of the queuosine in the wobble position of the QUC anticodon. This Deinococcus radiodurans (strain ATCC 13939 / DSM 20539 / JCM 16871 / CCUG 27074 / LMG 4051 / NBRC 15346 / NCIMB 9279 / VKM B-1422 / R1) protein is Glutamyl-Q tRNA(Asp) synthetase.